The following is a 620-amino-acid chain: NADPH-dependent diflavin oxidoreductase 1 (620 aa).

Residues 6–168 (IAILYGSETG…VYSEFEKRVL (163 aa)) enclose the Flavodoxin-like domain. FMN is bound by residues 12–17 (SETGTA), 59–62 (STTG), and 106–115 (LGDSSYSKFN). The FAD-binding FR-type domain occupies 222–475 (SSVKYGTVVT…LLPAGKQDRP (254 aa)). Residues arginine 380, 410 to 413 (RFFS), and 442 to 445 (GLCT) contribute to the FAD site. 535-536 (SR) is an NADP(+) binding site. Residue tryptophan 620 coordinates FAD.

The protein belongs to the NADPH-dependent diflavin oxidoreductase NDOR1 family. It in the N-terminal section; belongs to the flavodoxin family. This sequence in the C-terminal section; belongs to the flavoprotein pyridine nucleotide cytochrome reductase family. Interacts with DRE2; as part of the cytosolic iron-sulfur (Fe-S) protein assembly (CIA) machinery. FAD is required as a cofactor. Requires FMN as cofactor.

The protein resides in the cytoplasm. It localises to the mitochondrion. It catalyses the reaction 2 oxidized [2Fe-2S]-[protein] + NADPH = 2 reduced [2Fe-2S]-[protein] + NADP(+) + H(+). NADPH-dependent reductase which is a central component of the cytosolic iron-sulfur (Fe-S) protein assembly (CIA) machinery. Transfers electrons from NADPH via its FAD and FMN prosthetic groups to the [2Fe-2S] cluster of DRE2, another key component of the CIA machinery. In turn, this reduced cluster provides electrons for assembly of cytosolic iron-sulfur cluster proteins. Positively controls H(2)O(2)-induced cell death. The polypeptide is NADPH-dependent diflavin oxidoreductase 1 (Eremothecium gossypii (strain ATCC 10895 / CBS 109.51 / FGSC 9923 / NRRL Y-1056) (Yeast)).